The chain runs to 228 residues: UPF0328 protein ECU07_0040 (228 aa).

It belongs to the UPF0328 family.

This chain is UPF0328 protein ECU07_0040, found in Encephalitozoon cuniculi (strain GB-M1) (Microsporidian parasite).